Consider the following 486-residue polypeptide: Malonate-semialdehyde dehydrogenase 1 (486 aa).

NAD(+) contacts are provided by Phe154, Lys178, Glu181, Arg182, and Ser231. The Nucleophile role is filled by Cys286. Glu386 serves as a coordination point for NAD(+).

This sequence belongs to the aldehyde dehydrogenase family. IolA subfamily. Homotetramer.

It carries out the reaction 3-oxopropanoate + NAD(+) + CoA + H2O = hydrogencarbonate + acetyl-CoA + NADH + H(+). The catalysed reaction is 2-methyl-3-oxopropanoate + NAD(+) + CoA + H2O = propanoyl-CoA + hydrogencarbonate + NADH + H(+). It participates in polyol metabolism; myo-inositol degradation into acetyl-CoA; acetyl-CoA from myo-inositol: step 7/7. Catalyzes the oxidation of malonate semialdehyde (MSA) and methylmalonate semialdehyde (MMSA) into acetyl-CoA and propanoyl-CoA, respectively. Is involved in a myo-inositol catabolic pathway. Bicarbonate, and not CO2, is the end-product of the enzymatic reaction. The protein is Malonate-semialdehyde dehydrogenase 1 of Bacillus thuringiensis (strain Al Hakam).